We begin with the raw amino-acid sequence, 260 residues long: Ribosomal RNA small subunit methyltransferase G (260 aa).

S-adenosyl-L-methionine is bound by residues Gly-94, Phe-99, 117–119 (DST), 145–146 (AE), and Arg-164. A disordered region spans residues 236-260 (APTPPPYPRSPGTPKRQPLGQSNRP). The span at 237–246 (PTPPPYPRSP) shows a compositional bias: pro residues.

It belongs to the methyltransferase superfamily. RNA methyltransferase RsmG family.

It is found in the cytoplasm. Specifically methylates the N7 position of a guanine in 16S rRNA. This Synechococcus sp. (strain JA-2-3B'a(2-13)) (Cyanobacteria bacterium Yellowstone B-Prime) protein is Ribosomal RNA small subunit methyltransferase G.